A 310-amino-acid chain; its full sequence is Olfactory receptor 5P55 (310 aa).

The Extracellular segment spans residues 1 to 25 (METQNHTTVTEFILLGLTESSTLRV). A glycan (N-linked (GlcNAc...) asparagine) is linked at Asn5. The helical transmembrane segment at 26 to 46 (ILFMVFLGIYTVTLVGNFSII) threads the bilayer. Residues 47–54 (SLIRSCPQ) are Cytoplasmic-facing. Residues 55–75 (LHTPMYLFLSHLAFVDIGFST) form a helical membrane-spanning segment. Residues 76 to 99 (SITPTMFKGFLGNRLVLSVAACIA) are Extracellular-facing. Cys97 and Cys189 are oxidised to a cystine. Residues 100–120 (QFCITVTFGTVECFLLAVMAY) traverse the membrane as a helical segment. The Cytoplasmic portion of the chain corresponds to 121-133 (DRYVAICSPLLYS). A helical transmembrane segment spans residues 134-154 (THMSPRICFLLVGASYVGGCV). At 155-196 (NSGAFTSCLSILSFCGPNQIDHFFCDFPAVLKLSCSDVSIIG) the chain is on the extracellular side. Residues 197–217 (IIPSISAGSIIVITVFVIAVS) traverse the membrane as a helical segment. At 218–237 (YAYILITILKMRSTEGRQKA) the chain is on the cytoplasmic side. The chain crosses the membrane as a helical span at residues 238–258 (FSTCTSHLTAVTLYYGTITFI). Topologically, residues 259-271 (YVMPKSNYSTAQN) are extracellular. A glycan (N-linked (GlcNAc...) asparagine) is linked at Asn265. Residues 272-292 (KILSVFYTVVIPMLNPLIYSL) form a helical membrane-spanning segment. Over 293-310 (RNRDVKEALRKAIIRIFP) the chain is Cytoplasmic.

This sequence belongs to the G-protein coupled receptor 1 family.

It is found in the cell membrane. Potential odorant receptor. This Mus musculus (Mouse) protein is Olfactory receptor 5P55.